The following is an 83-amino-acid chain: Acylphosphatase (83 aa).

The 83-residue stretch at 1–83 folds into the Acylphosphatase-like domain; that stretch reads MIEGRVQRVG…TGDDWFEVRY (83 aa). Active-site residues include Arg-12 and Asn-30.

Belongs to the acylphosphatase family.

The enzyme catalyses an acyl phosphate + H2O = a carboxylate + phosphate + H(+). In Synechococcus sp. (strain CC9605), this protein is Acylphosphatase (acyP).